The primary structure comprises 501 residues: Glycerol kinase (501 aa).

Thr-14 serves as a coordination point for ADP. ATP-binding residues include Thr-14, Thr-15, and Ser-16. Thr-14 is a binding site for sn-glycerol 3-phosphate. Residue Arg-18 coordinates ADP. Sn-glycerol 3-phosphate-binding residues include Arg-84, Glu-85, Tyr-136, and Asp-246. 5 residues coordinate glycerol: Arg-84, Glu-85, Tyr-136, Asp-246, and Gln-247. 2 residues coordinate ADP: Thr-268 and Gly-311. Residues Thr-268, Gly-311, Gln-315, and Gly-412 each contribute to the ATP site. Gly-412 and Asn-416 together coordinate ADP.

The protein belongs to the FGGY kinase family. Homotetramer and homodimer (in equilibrium).

It carries out the reaction glycerol + ATP = sn-glycerol 3-phosphate + ADP + H(+). It functions in the pathway polyol metabolism; glycerol degradation via glycerol kinase pathway; sn-glycerol 3-phosphate from glycerol: step 1/1. Activated by phosphorylation and inhibited by fructose 1,6-bisphosphate (FBP). Functionally, key enzyme in the regulation of glycerol uptake and metabolism. Catalyzes the phosphorylation of glycerol to yield sn-glycerol 3-phosphate. The polypeptide is Glycerol kinase (Desulforamulus reducens (strain ATCC BAA-1160 / DSM 100696 / MI-1) (Desulfotomaculum reducens)).